Here is a 356-residue protein sequence, read N- to C-terminus: UDP-N-acetylglucosamine--N-acetylmuramyl-(pentapeptide) pyrophosphoryl-undecaprenol N-acetylglucosamine transferase (356 aa).

UDP-N-acetyl-alpha-D-glucosamine-binding positions include 15 to 17, N127, R163, S191, I244, 263 to 268, and Q288; these read TGG and ALTVSE.

This sequence belongs to the glycosyltransferase 28 family. MurG subfamily.

Its subcellular location is the cell inner membrane. The catalysed reaction is di-trans,octa-cis-undecaprenyl diphospho-N-acetyl-alpha-D-muramoyl-L-alanyl-D-glutamyl-meso-2,6-diaminopimeloyl-D-alanyl-D-alanine + UDP-N-acetyl-alpha-D-glucosamine = di-trans,octa-cis-undecaprenyl diphospho-[N-acetyl-alpha-D-glucosaminyl-(1-&gt;4)]-N-acetyl-alpha-D-muramoyl-L-alanyl-D-glutamyl-meso-2,6-diaminopimeloyl-D-alanyl-D-alanine + UDP + H(+). Its pathway is cell wall biogenesis; peptidoglycan biosynthesis. Functionally, cell wall formation. Catalyzes the transfer of a GlcNAc subunit on undecaprenyl-pyrophosphoryl-MurNAc-pentapeptide (lipid intermediate I) to form undecaprenyl-pyrophosphoryl-MurNAc-(pentapeptide)GlcNAc (lipid intermediate II). The polypeptide is UDP-N-acetylglucosamine--N-acetylmuramyl-(pentapeptide) pyrophosphoryl-undecaprenol N-acetylglucosamine transferase (Klebsiella pneumoniae subsp. pneumoniae (strain ATCC 700721 / MGH 78578)).